Here is a 236-residue protein sequence, read N- to C-terminus: NAD(P)H-hydrate epimerase (236 aa).

One can recognise a YjeF N-terminal domain in the interval 11 to 217 (AAALDRELMS…SIAKKYDFDV (207 aa)). 61–65 (NNGGD) provides a ligand contact to (6S)-NADPHX. K(+)-binding residues include Asn62 and Asp123. (6S)-NADPHX contacts are provided by residues 127–133 (GFSFSGE) and Asp156. A K(+)-binding site is contributed by Ser159.

The protein belongs to the NnrE/AIBP family. K(+) serves as cofactor.

Its subcellular location is the cytoplasm. The protein resides in the mitochondrion. It carries out the reaction (6R)-NADHX = (6S)-NADHX. The catalysed reaction is (6R)-NADPHX = (6S)-NADPHX. Its function is as follows. Catalyzes the epimerization of the S- and R-forms of NAD(P)HX, a damaged form of NAD(P)H that is a result of enzymatic or heat-dependent hydration. This is a prerequisite for the S-specific NAD(P)H-hydrate dehydratase to allow the repair of both epimers of NAD(P)HX. The sequence is that of NAD(P)H-hydrate epimerase from Neurospora crassa (strain ATCC 24698 / 74-OR23-1A / CBS 708.71 / DSM 1257 / FGSC 987).